A 288-amino-acid polypeptide reads, in one-letter code: uncharacterized protein (288 aa).

The ATP-grasp domain maps to 107-288; it reads KQIPTLIGPQ…LAIQLLASIA (182 aa). ATP-binding positions include Lys-145 and 178 to 188; that span reads QQYIATSNSEA. Mg(2+) contacts are provided by Asp-248, Glu-261, and Asn-263. 3 residues coordinate Mn(2+): Asp-248, Glu-261, and Asn-263.

This sequence belongs to the RimK family.

This is an uncharacterized protein from Mycoplasma pneumoniae (strain ATCC 29342 / M129 / Subtype 1) (Mycoplasmoides pneumoniae).